A 678-amino-acid chain; its full sequence is UvrABC system protein C (678 aa).

Residues 1–13 (MKKNISYGKHKTF) show a composition bias toward basic residues. Residues 1–25 (MKKNISYGKHKTFPSKLNGLEKQHS) are disordered. The region spanning 69–147 (HKPGVYRMFD…IKRLHPRFNV (79 aa)) is the GIY-YIG domain. The UVR domain occupies 257 to 292 (QSVKNDMIQAMHKAAEDLDFEQAAVYRDRLSALSHI).

This sequence belongs to the UvrC family. Interacts with UvrB in an incision complex.

It is found in the cytoplasm. The UvrABC repair system catalyzes the recognition and processing of DNA lesions. UvrC both incises the 5' and 3' sides of the lesion. The N-terminal half is responsible for the 3' incision and the C-terminal half is responsible for the 5' incision. This is UvrABC system protein C from Bartonella quintana (strain Toulouse) (Rochalimaea quintana).